A 290-amino-acid polypeptide reads, in one-letter code: 33 kDa chaperonin (290 aa).

2 cysteine pairs are disulfide-bonded: cysteine 235–cysteine 237 and cysteine 268–cysteine 271.

Belongs to the HSP33 family. In terms of processing, under oxidizing conditions two disulfide bonds are formed involving the reactive cysteines. Under reducing conditions zinc is bound to the reactive cysteines and the protein is inactive.

It localises to the cytoplasm. Redox regulated molecular chaperone. Protects both thermally unfolding and oxidatively damaged proteins from irreversible aggregation. Plays an important role in the bacterial defense system toward oxidative stress. The chain is 33 kDa chaperonin from Streptococcus pyogenes serotype M18 (strain MGAS8232).